The chain runs to 352 residues: Fatty acid synthase (352 aa).

The 352-residue stretch at 1–352 (MEDVVIAGIA…KVVLSLEHGL (352 aa)) folds into the Ketosynthase family 3 (KS3) domain. Active-site for beta-ketoacyl synthase activity residues include cysteine 161, histidine 293, and histidine 331.

Homodimer which monomers are arranged in a head to tail fashion.

The catalysed reaction is acetyl-CoA + n malonyl-CoA + 2n NADPH + 2n H(+) = a long-chain fatty acid + (n+1) CoA + n CO2 + 2n NADP(+).. Functionally, fatty acid synthetase catalyzes the formation of long-chain fatty acids from acetyl-CoA, malonyl-CoA and NADPH. This multifunctional protein has 7 catalytic activities as an acyl carrier protein. This Anser anser anser (Western greylag goose) protein is Fatty acid synthase (FASN).